Consider the following 133-residue polypeptide: uncharacterized protein (133 aa).

The protein belongs to the ycf68 family.

Its subcellular location is the plastid. It is found in the chloroplast. This is an uncharacterized protein from Oryza sativa subsp. japonica (Rice).